The following is a 97-amino-acid chain: RNA-binding protein Hfq (97 aa).

A Sm domain is found at 10 to 70 (DPFLNALRKE…ISTIVPARSV (61 aa)).

It belongs to the Hfq family. In terms of assembly, homohexamer.

RNA chaperone that binds small regulatory RNA (sRNAs) and mRNAs to facilitate mRNA translational regulation in response to envelope stress, environmental stress and changes in metabolite concentrations. Also binds with high specificity to tRNAs. In Neisseria gonorrhoeae (strain ATCC 700825 / FA 1090), this protein is RNA-binding protein Hfq.